A 158-amino-acid chain; its full sequence is MAARSVSGITRRVFMWTVSGTPCREFWSRFRKEKEPVVVETVEEKKEPILVCPPLRSRAYTPPEDLQSRLESYVKEVFGSSLPSNWQDISLEDSRLKFNLLAHLADDLGHVVPNSRLHQMCRVRDVLDFYNVPIQDRSKFDELSASNLPPNLKITWSY.

This sequence belongs to the mitochondrion-specific ribosomal protein mL50 family. As to quaternary structure, component of the mitochondrial large ribosomal subunit (mt-LSU). Mature mammalian 55S mitochondrial ribosomes consist of a small (28S) and a large (39S) subunit. The 28S small subunit contains a 12S ribosomal RNA (12S mt-rRNA) and 30 different proteins. The 39S large subunit contains a 16S rRNA (16S mt-rRNA), a copy of mitochondrial valine transfer RNA (mt-tRNA(Val)), which plays an integral structural role, and 52 different proteins.

The protein resides in the mitochondrion. In Homo sapiens (Human), this protein is Large ribosomal subunit protein mL50 (MRPL50).